The primary structure comprises 492 residues: Cysteine--tRNA ligase (492 aa).

C35 contributes to the Zn(2+) binding site. Positions P37–N47 match the 'HIGH' region motif. Zn(2+) contacts are provided by C230, H255, and E259. Positions K287–S291 match the 'KMSKS' region motif. K290 contacts ATP.

It belongs to the class-I aminoacyl-tRNA synthetase family. In terms of assembly, monomer. Requires Zn(2+) as cofactor.

It localises to the cytoplasm. The catalysed reaction is tRNA(Cys) + L-cysteine + ATP = L-cysteinyl-tRNA(Cys) + AMP + diphosphate. In Flavobacterium johnsoniae (strain ATCC 17061 / DSM 2064 / JCM 8514 / BCRC 14874 / CCUG 350202 / NBRC 14942 / NCIMB 11054 / UW101) (Cytophaga johnsonae), this protein is Cysteine--tRNA ligase.